A 287-amino-acid chain; its full sequence is CTD small phosphatase-like protein 3 (287 aa).

An FCP1 homology domain is found at 60–219; the sequence is RSTPEYTLVL…LKLCSFLEAI (160 aa).

Belongs to the CTDSPL2 family.

Functionally, probable phosphatase. The sequence is that of CTD small phosphatase-like protein 3 (scpl-3) from Caenorhabditis elegans.